The sequence spans 243 residues: ATP-dependent dethiobiotin synthetase BioD (243 aa).

12-17 (DVGKTL) is an ATP binding site. T16 lines the Mg(2+) pocket. K37 is a catalytic residue. Position 41 (S41) interacts with substrate. ATP contacts are provided by residues D54, 115–118 (EGCG), and 179–180 (NM). Mg(2+) is bound by residues D54 and E115.

Belongs to the dethiobiotin synthetase family. Homodimer. The cofactor is Mg(2+).

It is found in the cytoplasm. It catalyses the reaction (7R,8S)-7,8-diammoniononanoate + CO2 + ATP = (4R,5S)-dethiobiotin + ADP + phosphate + 3 H(+). It participates in cofactor biosynthesis; biotin biosynthesis; biotin from 7,8-diaminononanoate: step 1/2. Catalyzes a mechanistically unusual reaction, the ATP-dependent insertion of CO2 between the N7 and N8 nitrogen atoms of 7,8-diaminopelargonic acid (DAPA, also called 7,8-diammoniononanoate) to form a ureido ring. The protein is ATP-dependent dethiobiotin synthetase BioD of Caldicellulosiruptor saccharolyticus (strain ATCC 43494 / DSM 8903 / Tp8T 6331).